The primary structure comprises 112 residues: Large ribosomal subunit protein eL30x (112 aa).

This sequence belongs to the eukaryotic ribosomal protein eL30 family.

The chain is Large ribosomal subunit protein eL30x (RPL30C) from Arabidopsis thaliana (Mouse-ear cress).